Reading from the N-terminus, the 139-residue chain is D-ribose pyranase (139 aa).

Histidine 20 serves as the catalytic Proton donor. Substrate-binding positions include aspartate 28, histidine 106, and 128-130; that span reads YAN.

Belongs to the RbsD / FucU family. RbsD subfamily. Homodecamer.

It is found in the cytoplasm. The enzyme catalyses beta-D-ribopyranose = beta-D-ribofuranose. Its pathway is carbohydrate metabolism; D-ribose degradation; D-ribose 5-phosphate from beta-D-ribopyranose: step 1/2. Catalyzes the interconversion of beta-pyran and beta-furan forms of D-ribose. In Haemophilus influenzae (strain PittGG), this protein is D-ribose pyranase.